The chain runs to 358 residues: Zinc transporter ZIP1 (358 aa).

The Extracellular segment spans residues 1–7 (MDLLFAK). The helical transmembrane segment at 8-28 (IICIGIFLVVTTFGCFIPHLM) threads the bilayer. Residues 29-53 (GLYKEKENEEKNKRVKNILSNLNCF) lie on the Cytoplasmic side of the membrane. Residues 54–74 (GSGFIFSIIMFHLLPETIHII) traverse the membrane as a helical segment. At 75–91 (SDHGNIRIFNTSDSQMK) the chain is on the extracellular side. Residues 92–112 (ILYIFFFVFIGFCMQLGLEYV) traverse the membrane as a helical segment. Residues 113-186 (LPVDTNICCV…GKFLEILTLQ (74 aa)) lie on the Cytoplasmic side of the membrane. The helical transmembrane segment at 187-207 (SFFLTISLAIHSCIEGMIIGT) threads the bilayer. Topologically, residues 208–213 (STDVNY) are extracellular. A helical membrane pass occupies residues 214 to 234 (VFISSFCILLHKWIAGVTVSL). Residues 235-246 (SLNSNNMNKTLK) lie on the Cytoplasmic side of the membrane. Residues 247–267 (AILLLTFVFASPLGIVLGHMA) form a helical membrane-spanning segment. The Extracellular segment spans residues 268–273 (KSAGQK). Residues 274–294 (VTCLINAVSIGTLLFIGCEIL) traverse the membrane as a helical segment. Residues 295–310 (LNEIKQNISRKVRLCK) are Cytoplasmic-facing. Residues 311–331 (WLSFCFSCLIAFALISFTTSM) traverse the membrane as a helical segment. At 332–358 (APHTHGDIDTHVHVHHHDHDHDHGHNH) the chain is on the extracellular side.

It belongs to the ZIP transporter (TC 2.A.5) family. As to quaternary structure, homodimer.

The protein resides in the plastid. It localises to the apicoplast. It is found in the cell membrane. It catalyses the reaction Zn(2+)(in) = Zn(2+)(out). It carries out the reaction Fe(2+)(in) = Fe(2+)(out). Functionally, transporter for the divalent zinc cation. Mediates the influx of zinc into cells from extracellular space. Can transport divalent iron ions. Does not transport manganese and cadmium cations. In Plasmodium falciparum (isolate 3D7), this protein is Zinc transporter ZIP1.